Consider the following 320-residue polypeptide: Probable cell division protein WhiA (320 aa).

The segment at residues 276–310 (TLKELGELVSGGKISKSGINHRLRKIDEIAERLRA) is a DNA-binding region (H-T-H motif).

Belongs to the WhiA family.

Involved in cell division and chromosome segregation. This is Probable cell division protein WhiA from Geobacillus sp. (strain WCH70).